A 706-amino-acid polypeptide reads, in one-letter code: Cyclic nucleotide-gated ion channel 18 (706 aa).

Over 1–53 (MNKIRSLRCLLPETITSASTAASNRGSDGSQFSVLWRHQILDPDSNIVTYWNH) the chain is Cytoplasmic. Residues 54 to 74 (VFLITSILALFLDPFYFYVPY) traverse the membrane as a helical segment. Residues 75–86 (VGGPACLSIDIS) are Extracellular-facing. Residues 87 to 107 (LAATVTFFRTVADIFHLLHIF) traverse the membrane as a helical segment. The Cytoplasmic portion of the chain corresponds to 108-142 (MKFRTAFVARSSRVFGRGELVMDSREIAMRYLKTD). Residues 143 to 163 (FLIDVAAMLPLPQLVIWLVIP) form a helical membrane-spanning segment. Residues 164-174 (AATNGTANHAN) lie on the Extracellular side of the membrane. The helical transmembrane segment at 175-195 (STLALIVLVQYIPRSFIIFPL) threads the bilayer. At 196–217 (NQRIIKTTGFIAKTAWAGAAYN) the chain is on the cytoplasmic side. The helical transmembrane segment at 218-238 (LLLYILASHVLGAMWYLSSIG) threads the bilayer. Over 239-345 (RQFSCWSNVC…ITTSVYLGET (107 aa)) the chain is Extracellular. The chain crosses the membrane as a helical span at residues 346–366 (LFCITICIFGLILFTLLIGNM). Over 367-706 (QSSLQSMSVR…PDFSIDKEDV (340 aa)) the chain is Cytoplasmic. A nucleoside 3',5'-cyclic phosphate contacts are provided by residues 449 to 579 (FFSQ…AFRY) and Glu520. The tract at residues 565 to 580 (FKRLQSKKLQHAFRYY) is calmodulin-binding. The region spanning 585 to 614 (RAWGACFVQSAWRRYKRRKLAKELSLHESS) is the IQ domain. The segment at 661–706 (ANTRRGTNQKASSSSTGKKDGSSTSLKMPQLFKPDEPDFSIDKEDV) is disordered. Positions 693-706 (KPDEPDFSIDKEDV) are enriched in basic and acidic residues.

The protein belongs to the cyclic nucleotide-gated cation channel (TC 1.A.1.5) family. In terms of assembly, homomultimer. Interacts with CPK32. Expressed in pollen grains. Not detected in leaves, roots or root hairs.

The protein localises to the cell membrane. The protein resides in the cytoplasmic vesicle membrane. In terms of biological role, cyclic nucleotide-gated ion channel required for directional pollen tube growth into the transmitting tract. Acts as a Ca(2+)-permeable divalent cation-selective channel inhibited by either lanthanum or gadolinium. Regulated by CPK32 to mediate Ca(2+) transport across the plasma membrane in response to Ca(2+) oscillation. This is Cyclic nucleotide-gated ion channel 18 from Arabidopsis thaliana (Mouse-ear cress).